The following is a 511-amino-acid chain: MKCLLYLAFLFIGVNCKFTIVFPHNQKGNWKNVPSNYHYCPSSSDLNWHNDLIGTALQVKMPKSHKAIQADGWMCHASKWVTTCDFRWYGPKYITHSIRSFTPSVEQCKESIEQTKQGTWLNPGFPPQSCGYATVTDAEAAIVQVTPHHVLVDEYTGEWVDSQFINGKCSNDICPTVHNSTTWHSDYKVKGLCDSNLISTDITFFSEDGELSSLGKEGTGFRSNYFAYETGDKACKMQYCKHWGVRLPSGVWFEMADKDLFAAARFPECPEGSSISAPSQTSVDVSLIQDVERILDYSLCQETWSKIRAGLPISPVDLSYLAPKNPGTGPVFTIINGTLKYFETRYIRVDIAAPILSRMVGMISGTTTERELWDDWAPYEDVEIGPNGVLRTSLGYKFPLYMIGHGMLDSDLHLSSKAQVFEHPHIQDAASQLPDDETLFFGDTGLSKNPIEFVEGWFSSWKSSIASFFFIIGLIIGLFLVLRVGIYLCIKLKHTKKRQIYTDIEMNRLGK.

A signal peptide spans 1 to 16; that stretch reads MKCLLYLAFLFIGVNC. Residues 17–467 lie on the Virion surface side of the membrane; it reads KFTIVFPHNQ…FSSWKSSIAS (451 aa). The segment at 18 to 35 is trimerization; it reads FTIVFPHNQKGNWKNVPS. 6 disulfide bridges follow: C40-C300, C75-C108, C84-C130, C169-C174, C193-C240, and C235-C269. A fusion peptide region spans residues 53–172; sequence IGTALQVKMP…QFINGKCSND (120 aa). N-linked (GlcNAc...) asparagine; by host glycosylation occurs at N179. Residues 259-309 are trimerization; sequence DLFAAARFPECPEGSSISAPSQTSVDVSLIQDVERILDYSLCQETWSKIRA. N336 carries N-linked (GlcNAc...) asparagine; by host glycosylation. The trimerization stretch occupies residues 383-405; that stretch reads EIGPNGVLRTSLGYKFPLYMIGH. Residues 468-488 form a helical membrane-spanning segment; the sequence is FFFIIGLIIGLFLVLRVGIYL. C489 is lipidated: S-palmitoyl cysteine; by host. Residues 489–511 lie on the Intravirion side of the membrane; the sequence is CIKLKHTKKRQIYTDIEMNRLGK. The short motif at 496-506 is the basolateral targeting ex vivo element; it reads KKRQIYTDIEM.

Belongs to the vesiculovirus glycoprotein family. As to quaternary structure, homotrimer. Interacts with host LDL at target cell surface. Glycosylated by host. Palmitoylated by host.

Its subcellular location is the virion membrane. The protein resides in the host membrane. Functionally, attaches the virus to host LDL receptors, inducing clathrin-dependent endocytosis of the virion. In the endosome, the acidic pH induces conformational changes in the glycoprotein trimer, which trigger fusion between virus and endosomal membrane. This chain is Glycoprotein (G), found in Vesicular stomatitis Indiana virus (strain Orsay) (VSIV).